The primary structure comprises 160 residues: Transcription elongation factor GreA (160 aa).

Residues 43–75 (LSENAEYEAAREQQAQMESKIVDLENKLTRASI) adopt a coiled-coil conformation.

Belongs to the GreA/GreB family.

Necessary for efficient RNA polymerase transcription elongation past template-encoded arresting sites. The arresting sites in DNA have the property of trapping a certain fraction of elongating RNA polymerases that pass through, resulting in locked ternary complexes. Cleavage of the nascent transcript by cleavage factors such as GreA or GreB allows the resumption of elongation from the new 3'terminus. GreA releases sequences of 2 to 3 nucleotides. In Prosthecochloris aestuarii (strain DSM 271 / SK 413), this protein is Transcription elongation factor GreA.